A 216-amino-acid polypeptide reads, in one-letter code: Penicillin-binding protein activator LpoB (216 aa).

An N-terminal signal peptide occupies residues 1-20 (MIKNLSRYALVTAFALFLSG). The N-palmitoyl cysteine moiety is linked to residue Cys21. Cys21 carries S-diacylglycerol cysteine lipidation. Residues 28–77 (QPAPVDEAKPGTEQPAQPTQPVPTVPSVPTVPAQPGPIEHPDQTSQPAPR) form a disordered region.

This sequence belongs to the LpoB family. In terms of assembly, interacts with PBP1b.

The protein localises to the cell outer membrane. Its function is as follows. Regulator of peptidoglycan synthesis that is essential for the function of penicillin-binding protein 1B (PBP1b). The polypeptide is Penicillin-binding protein activator LpoB (Enterobacter sp. (strain 638)).